The following is a 451-amino-acid chain: AP-4 complex subunit mu (451 aa).

The region spanning 184–450 (REEIFVDIIE…VTQANSYVAR (267 aa)) is the MHD domain.

The protein belongs to the adaptor complexes medium subunit family. As to quaternary structure, adaptor protein complex 4 (AP-4) is a heterotetramer composed of two large adaptins (epsilon-type subunit and beta-type subunit), a medium adaptin (mu-type subunit) and a small adaptin (sigma-type subunit).

It is found in the golgi apparatus. It localises to the trans-Golgi network. Its subcellular location is the membrane. The protein resides in the coated pit. Functionally, subunit of novel type of clathrin- or non-clathrin-associated protein coat involved in targeting proteins from the trans-Golgi network (TGN) to the endosomal-lysosomal system. The sequence is that of AP-4 complex subunit mu (AP4M) from Arabidopsis thaliana (Mouse-ear cress).